A 261-amino-acid chain; its full sequence is Glucosamine-6-phosphate deaminase (261 aa).

The active-site Proton acceptor; for enolization step is the D67. D136 serves as the catalytic For ring-opening step. The Proton acceptor; for ring-opening step role is filled by H138. E143 (for ring-opening step) is an active-site residue.

It belongs to the glucosamine/galactosamine-6-phosphate isomerase family. NagB subfamily.

It carries out the reaction alpha-D-glucosamine 6-phosphate + H2O = beta-D-fructose 6-phosphate + NH4(+). Its pathway is amino-sugar metabolism; N-acetylneuraminate degradation; D-fructose 6-phosphate from N-acetylneuraminate: step 5/5. Catalyzes the reversible isomerization-deamination of glucosamine 6-phosphate (GlcN6P) to form fructose 6-phosphate (Fru6P) and ammonium ion. The chain is Glucosamine-6-phosphate deaminase from Streptomyces avermitilis (strain ATCC 31267 / DSM 46492 / JCM 5070 / NBRC 14893 / NCIMB 12804 / NRRL 8165 / MA-4680).